We begin with the raw amino-acid sequence, 841 residues long: Neuronal tyrosine-phosphorylated phosphoinositide-3-kinase adapter 1 (841 aa).

Disordered stretches follow at residues 1 to 45 (MNLL…PGVR), 64 to 448 (PASQ…PAAL), 655 to 679 (RAWN…TSGI), 745 to 769 (RPCS…PLPP), and 812 to 833 (LPSW…RRQH). Over residues 8–25 (TKLEWRQHKEEEAKRSSS) the composition is skewed to basic and acidic residues. The span at 26 to 39 (KEVAPAGSAGPAAG) shows a compositional bias: low complexity. Residues 76–186 (SAMAPRSLSC…DESCPPGPSP (111 aa)) are involved in CYFIP1- and NCKAP1-binding. A compositionally biased stretch (gly residues) spans 94–103 (VGGGPGGASG). The segment covering 114–123 (PPAKPRRHPS) has biased composition (basic residues). Polar residues predominate over residues 167–176 (SPNTQLSVSF). Gly residues predominate over residues 224 to 243 (FRGGGRSGGGLAGPPLGGGG). The segment covering 252–261 (SDSEESEAIY) has biased composition (acidic residues). Over residues 279 to 295 (GPPPLTATSPPQQPHAL) the composition is skewed to pro residues. Residues 759–769 (PALPLPLPLPP) are compositionally biased toward pro residues.

It belongs to the NYAP family. As to quaternary structure, interacts with ACOT9, ARHGAP26 and PIK3R2. Interacts with components of the WAVE1 complex, CYFIP1 and NCKAP1; this interaction mediates PI3K-WAVE1 association and actin cytoskeleton remodeling. Phosphorylated on tyrosine residues by FYN upon stimulation with CNTN5.

Its function is as follows. Activates PI3K and concomitantly recruits the WAVE1 complex to the close vicinity of PI3K and regulates neuronal morphogenesis. The sequence is that of Neuronal tyrosine-phosphorylated phosphoinositide-3-kinase adapter 1 (NYAP1) from Homo sapiens (Human).